We begin with the raw amino-acid sequence, 71 residues long: Protein KleB (71 aa).

The H-T-H motif DNA-binding region spans valine 9–isoleucine 28.

This is Protein KleB (kleB) from Escherichia coli.